We begin with the raw amino-acid sequence, 150 residues long: UPF0506 protein SJCHGC03144 (150 aa).

A signal peptide spans 1-18 (MNTCIQLLILCLVTVINS). N-linked (GlcNAc...) asparagine glycans are attached at residues Asn-20, Asn-36, Asn-52, and Asn-110. Disulfide bonds link Cys-116–Cys-130, Cys-123–Cys-134, and Cys-129–Cys-139.

It belongs to the UPF0506 family.

Its subcellular location is the secreted. This Schistosoma japonicum (Blood fluke) protein is UPF0506 protein SJCHGC03144.